The sequence spans 498 residues: ATP synthase subunit beta, chloroplastic (498 aa).

Thr-6 is subject to Phosphothreonine. Ser-13 carries the phosphoserine modification. 172–179 (GGAGVGKT) is a binding site for ATP.

This sequence belongs to the ATPase alpha/beta chains family. In terms of assembly, F-type ATPases have 2 components, CF(1) - the catalytic core - and CF(0) - the membrane proton channel. CF(1) has five subunits: alpha(3), beta(3), gamma(1), delta(1), epsilon(1). CF(0) has four main subunits: a(1), b(1), b'(1) and c(9-12).

The protein localises to the plastid. The protein resides in the chloroplast thylakoid membrane. The enzyme catalyses ATP + H2O + 4 H(+)(in) = ADP + phosphate + 5 H(+)(out). In terms of biological role, produces ATP from ADP in the presence of a proton gradient across the membrane. The catalytic sites are hosted primarily by the beta subunits. This chain is ATP synthase subunit beta, chloroplastic, found in Brassica napus (Rape).